The following is a 518-amino-acid chain: Uronate isomerase (518 aa).

This sequence belongs to the metallo-dependent hydrolases superfamily. Uronate isomerase family.

The catalysed reaction is D-glucuronate = D-fructuronate. It carries out the reaction aldehydo-D-galacturonate = keto-D-tagaturonate. It participates in carbohydrate metabolism; pentose and glucuronate interconversion. The polypeptide is Uronate isomerase (uxaC) (Corynebacterium glutamicum (strain ATCC 13032 / DSM 20300 / JCM 1318 / BCRC 11384 / CCUG 27702 / LMG 3730 / NBRC 12168 / NCIMB 10025 / NRRL B-2784 / 534)).